Reading from the N-terminus, the 2204-residue chain is Non-reducing polyketide synthase CTB1 (2204 aa).

Positions 11–250 (AFGDQTYDCS…TRLPITAPYH (240 aa)) are N-terminal acylcarrier protein transacylase domain (SAT). A Ketosynthase family 3 (KS3) domain is found at 382–815 (KSPIAILAAS…GGNTCLVLED (434 aa)). Residues cysteine 554, histidine 689, and histidine 734 each act as for beta-ketoacyl synthase activity in the active site. Positions 923–1224 (AFTGQGSAFE…QTFASINKDK (302 aa)) are malonyl-CoA:ACP transacylase (MAT) domain. The tract at residues 1299 to 1619 (SSSIHKVITN…VPKRLMHYIV (321 aa)) is product template (PT) domain. Positions 1303–1439 (HKVITNTITA…CKIRFGSLEK (137 aa)) are N-terminal hotdog fold. Residues 1303–1616 (HKVITNTITA…LQGVPKRLMH (314 aa)) form the PKS/mFAS DH domain. Histidine 1336 (proton acceptor; for dehydratase activity) is an active-site residue. Residues 1468–1616 (TYRFSKGMIY…LQGVPKRLMH (149 aa)) are C-terminal hotdog fold. The Proton donor; for dehydratase activity role is filled by aspartate 1528. A disordered region spans residues 1625–1674 (KASGPPTEKKGSSPPVEKKASAPVAPTRPAIQRKNASIPPPATQVTPQNK). Residues 1631 to 1644 (TEKKGSSPPVEKKA) are compositionally biased toward basic and acidic residues. Carrier domains follow at residues 1679 to 1756 (PSVS…TRLS) and 1783 to 1865 (DPSP…SGST). O-(pantetheine 4'-phosphoryl)serine is present on residues serine 1716 and serine 1824. Residues 1864–1875 (STESFDSTTTKP) are compositionally biased toward polar residues. Residues 1864–1931 (STESFDSTTT…PPKGRIPPAW (68 aa)) form a disordered region. The segment covering 1880–1895 (ATPPLTDSSASSPPSS) has biased composition (low complexity). Positions 1945 to 2195 (ILFLFPDGAG…SGAQMLVEHM (251 aa)) are thioesterase (TE) domain.

Pantetheine 4'-phosphate serves as cofactor.

The enzyme catalyses 6 malonyl-CoA + acetyl-CoA + 6 H(+) = nor-toralactone + 6 CO2 + 7 CoA + 2 H2O. The protein operates within mycotoxin biosynthesis. Its function is as follows. Polyketide synthase; part of the gene cluster that mediates the biosynthesis of cercosporin, a light-activated, non-host-selective toxin. The perylenequinone chromophore of cercosporin absorbs light energy to attain an electronically-activated triplet state and produces active oxygen species such as the hydroxyl radical, superoxide, hydrogen peroxide or singlet oxygen upon reaction with oxygen molecules. These reactive oxygen species cause damage to various cellular components including lipids, proteins and nucleic acids. The first step of cercosporin biosynthesis is performed by the polyketide synthase CTB1 which catalyzes the formation of nor-toralactone. The starter unit acyltransferase (SAT) domain of CTB1 initiates polyketide extension by the selective utilization of acetyl-CoA, which is elongated to the heptaketide in the beta-ketoacyl synthase (KS) domain by successive condensations with six malonyl units introduced by the malonyl acyltransferase (MAT) domain. The product template (PT) domain catalyzes C4-C9 and C2-C11 aldol cyclizations and dehydrations to a trihydroxynaphthalene, which is thought to be delivered to the thioesterase (TE) domain for product release. The bifunctional enzyme CTB3 then methylates nor-toralactone to toralactone before conducting an unusual oxidative aromatic ring opening. The O-methyltransferase CTB2 further methylates the nascent OH-6 of the CBT3 product, blocking further oxidation at this site before the reductase CTB6 reduces the 2-oxopropyl ketone at position C7, giving naphthalene. The FAD-dependent monooxygenase CTB5 in concert with the multicopper oxidase CTB12 are responsible for homodimerization of naphthalene with CTB7 installing the dioxepine moiety, finally producing cercosporin. The fasciclin domain-containing protein CTB11 might act with CTB5 and CTB12 whereas the roles of CTB9 and CTB10 have still to be elucidated. The chain is Non-reducing polyketide synthase CTB1 from Cercospora beticola (Sugarbeet leaf spot fungus).